Reading from the N-terminus, the 89-residue chain is Small ribosomal subunit protein uS17 (89 aa).

Belongs to the universal ribosomal protein uS17 family. Part of the 30S ribosomal subunit.

One of the primary rRNA binding proteins, it binds specifically to the 5'-end of 16S ribosomal RNA. The sequence is that of Small ribosomal subunit protein uS17 from Xylella fastidiosa (strain Temecula1 / ATCC 700964).